A 69-amino-acid chain; its full sequence is Toxin CSTX-11 (69 aa).

Intrachain disulfides connect C6/C21, C13/C30, C20/C47, and C32/C45.

In terms of tissue distribution, expressed by the venom gland.

The protein localises to the secreted. The protein resides in the target cell membrane. In terms of biological role, spider venom toxin that shows calcium channel blocking activity and exhibits cytolytic activity by affecting the outer leaflet curvature and/or pore formation across the membrane. It blocks L-type calcium channels (Cav1/CACNA1) in mammalian neurons at nanomolar concentrations. Furthermore, it produces a slow voltage-independent block of mid/low and high voltage-activated calcium channels in cockroach neurons. Potassium ions, histamine, M-ctenitoxin-Cs1a (AC P83619), CSTX-9 (AC P58604), and CSTX-13 (AC P83919) synergistically increase the insecticidal activity of this toxin. In vivo, it causes paralysis in blow flies and provokes death in drosophila. The chain is Toxin CSTX-11 from Cupiennius salei (American wandering spider).